Consider the following 483-residue polypeptide: Aspartyl/glutamyl-tRNA(Asn/Gln) amidotransferase subunit B (483 aa).

It belongs to the GatB/GatE family. GatB subfamily. As to quaternary structure, heterotrimer of A, B and C subunits.

It carries out the reaction L-glutamyl-tRNA(Gln) + L-glutamine + ATP + H2O = L-glutaminyl-tRNA(Gln) + L-glutamate + ADP + phosphate + H(+). It catalyses the reaction L-aspartyl-tRNA(Asn) + L-glutamine + ATP + H2O = L-asparaginyl-tRNA(Asn) + L-glutamate + ADP + phosphate + 2 H(+). Functionally, allows the formation of correctly charged Asn-tRNA(Asn) or Gln-tRNA(Gln) through the transamidation of misacylated Asp-tRNA(Asn) or Glu-tRNA(Gln) in organisms which lack either or both of asparaginyl-tRNA or glutaminyl-tRNA synthetases. The reaction takes place in the presence of glutamine and ATP through an activated phospho-Asp-tRNA(Asn) or phospho-Glu-tRNA(Gln). This chain is Aspartyl/glutamyl-tRNA(Asn/Gln) amidotransferase subunit B, found in Rickettsia rickettsii (strain Iowa).